Reading from the N-terminus, the 383-residue chain is 8-amino-7-oxononanoate synthase (383 aa).

R20 lines the substrate pocket. Residue 107 to 108 (GY) coordinates pyridoxal 5'-phosphate. H132 is a binding site for substrate. Pyridoxal 5'-phosphate is bound by residues S178, H206, and T233. K236 is subject to N6-(pyridoxal phosphate)lysine. T349 is a substrate binding site.

Belongs to the class-II pyridoxal-phosphate-dependent aminotransferase family. BioF subfamily. In terms of assembly, homodimer. It depends on pyridoxal 5'-phosphate as a cofactor.

It carries out the reaction 6-carboxyhexanoyl-[ACP] + L-alanine + H(+) = (8S)-8-amino-7-oxononanoate + holo-[ACP] + CO2. It participates in cofactor biosynthesis; biotin biosynthesis. Its function is as follows. Catalyzes the decarboxylative condensation of pimeloyl-[acyl-carrier protein] and L-alanine to produce 8-amino-7-oxononanoate (AON), [acyl-carrier protein], and carbon dioxide. This is 8-amino-7-oxononanoate synthase from Chromobacterium violaceum (strain ATCC 12472 / DSM 30191 / JCM 1249 / CCUG 213 / NBRC 12614 / NCIMB 9131 / NCTC 9757 / MK).